The following is a 484-amino-acid chain: RNA polymerase sigma-54 factor 1 (484 aa).

A DNA-binding region (H-T-H motif) is located at residues 355 to 374 (NLKAVAEAIQMHESTVSRVT). The short motif at 444–452 (ARRTVAKYR) is the RPON box element. Residues 464-484 (RRDNMWSTMNSRASGGTGLDK) form a disordered region. Over residues 468–477 (MWSTMNSRAS) the composition is skewed to polar residues.

Belongs to the sigma-54 factor family.

In terms of biological role, sigma factors are initiation factors that promote the attachment of RNA polymerase to specific initiation sites and are then released. This sigma factor is responsible for the expression of the nitrogen fixation genes. This Bradyrhizobium diazoefficiens (strain JCM 10833 / BCRC 13528 / IAM 13628 / NBRC 14792 / USDA 110) protein is RNA polymerase sigma-54 factor 1 (rpoN1).